Consider the following 189-residue polypeptide: MNPEMIMEMMNSDIAKEMAPKMMPKMMPLALEKFLQYIPENERKEFIARIVDIIVSKDENKEVSAEYLDMFEALLNVKGLKIHSRGGKGAIKEKISPMDLFLAGLCGCVCIAVGNTLKANNIDAEIKVDGKVEKSFEEGKIKKVIINIYVKVDGDIDKEKLKKLVLEGSKKCLISNSISCEIEKNVILE.

It belongs to the OsmC/Ohr family.

This is an uncharacterized protein from Methanocaldococcus jannaschii (strain ATCC 43067 / DSM 2661 / JAL-1 / JCM 10045 / NBRC 100440) (Methanococcus jannaschii).